Here is a 127-residue protein sequence, read N- to C-terminus: MSKAAEVIEIIKGMTALELKELKELFEETFGVTAAAPVAVAAAPAAGAAAAAPAAEEKTEFDVILKNPGANKIAVIKVVRELTGLGLKEAKDLVDGAPKPVKEKVSKADADAAAEKLKEAGAEVEVK.

Belongs to the bacterial ribosomal protein bL12 family. As to quaternary structure, homodimer. Part of the ribosomal stalk of the 50S ribosomal subunit. Forms a multimeric L10(L12)X complex, where L10 forms an elongated spine to which 2 to 4 L12 dimers bind in a sequential fashion. Binds GTP-bound translation factors.

Its function is as follows. Forms part of the ribosomal stalk which helps the ribosome interact with GTP-bound translation factors. Is thus essential for accurate translation. This Symbiobacterium thermophilum (strain DSM 24528 / JCM 14929 / IAM 14863 / T) protein is Large ribosomal subunit protein bL12.